Here is a 166-residue protein sequence, read N- to C-terminus: Thiamine precursor transporter HmpT (166 aa).

The next 5 helical transmembrane spans lie at 14 to 34, 35 to 55, 62 to 82, 105 to 125, and 126 to 146; these read LLAIWTALTFVLGRLFTFPIP, GSAGNILTLLDVGIYTAVFLF, IIGGFAAFLLDLTAGFSNYMF, FLLSLLVMVGGYFIVGGLMYG, and WGSAIAGLWVNIVQVIVGFVL.

In terms of assembly, in E.coli forms a stable energy-coupling factor (ECF) transporter complex composed of 2 membrane-embedded substrate-binding protein (S component), 2 ATP-binding proteins (A and A' components) and 2 transmembrane proteins (T component), probably with a stoichiometry of 2:1:1:2. May be able to interact with more than 1 S component at a time.

Its subcellular location is the cell membrane. Probably a thiamine precursor-binding protein that interacts with the energy-coupling factor (ECF) ABC-transporter complex. Unlike classic ABC transporters this ECF transporter provides the energy necessary to transport a number of different substrates. The substrates themselves are bound by transmembrane, not extracytoplasmic soluble proteins. This Lactococcus lactis subsp. cremoris (strain MG1363) protein is Thiamine precursor transporter HmpT (hmpT).